Here is a 122-residue protein sequence, read N- to C-terminus: Large ribosomal subunit protein bL12 (122 aa).

It belongs to the bacterial ribosomal protein bL12 family. As to quaternary structure, homodimer. Part of the ribosomal stalk of the 50S ribosomal subunit. Forms a multimeric L10(L12)X complex, where L10 forms an elongated spine to which 2 to 4 L12 dimers bind in a sequential fashion. Binds GTP-bound translation factors.

Functionally, forms part of the ribosomal stalk which helps the ribosome interact with GTP-bound translation factors. Is thus essential for accurate translation. This Actinobacillus pleuropneumoniae serotype 5b (strain L20) protein is Large ribosomal subunit protein bL12.